The primary structure comprises 155 residues: Small ribosomal subunit protein uS7cz/uS7cy (155 aa).

Belongs to the universal ribosomal protein uS7 family. In terms of assembly, part of the 30S ribosomal subunit.

The protein resides in the plastid. It localises to the chloroplast. In terms of biological role, one of the primary rRNA binding proteins, it binds directly to 16S rRNA where it nucleates assembly of the head domain of the 30S subunit. In Lemna minor (Common duckweed), this protein is Small ribosomal subunit protein uS7cz/uS7cy (rps7-A).